We begin with the raw amino-acid sequence, 324 residues long: NADH-cytochrome b5 reductase 2 (324 aa).

The chain crosses the membrane as a helical span at residues 31–47 (IPLIGGITLAAGAGYYY). The region spanning 70–178 (QGWIGLKLAH…KGPLPKYPWE (109 aa)) is the FAD-binding FR-type domain. Residue 181 to 216 (KHDHICLIAGGTGITPMYQLVRKIFSNPEDKTKVTL) participates in FAD binding.

This sequence belongs to the flavoprotein pyridine nucleotide cytochrome reductase family. The cofactor is FAD.

It localises to the mitochondrion outer membrane. The catalysed reaction is 2 Fe(III)-[cytochrome b5] + NADH = 2 Fe(II)-[cytochrome b5] + NAD(+) + H(+). May mediate the reduction of outer membrane cytochrome b5. This chain is NADH-cytochrome b5 reductase 2 (MCR1), found in Ajellomyces capsulatus (strain NAm1 / WU24) (Darling's disease fungus).